Here is a 309-residue protein sequence, read N- to C-terminus: Taste receptor type 2 member 46 (309 aa).

Position 1 (Met-1) is a topological domain, extracellular. Residues 2 to 22 (ITFLPIIFSILIVVTFVIGNF) traverse the membrane as a helical segment. Over 23 to 46 (ANGFIALANSIEWFKRQKISFADQ) the chain is Cytoplasmic. Residues 47–67 (ILTALAVSRVGLLWVLLLNWY) traverse the membrane as a helical segment. Topologically, residues 68-86 (ATELNPAFYSIEVRITAYN) are extracellular. The chain crosses the membrane as a helical span at residues 87 to 107 (VWAVISHFSNWLATSLSIFYL). The Cytoplasmic portion of the chain corresponds to 108 to 126 (LKIANFSNLIFLRLKRRVK). Residues 127–147 (SVVLVILLGPLLFLVCHLFVI) traverse the membrane as a helical segment. Over 148–178 (NMNQIIWTKEYEGNMTWKIKLRSAMYLSDTT) the chain is Extracellular. An N-linked (GlcNAc...) asparagine glycan is attached at Asn-161. The helical transmembrane segment at 179–199 (VTILANLVPFTLTLISFLLLI) threads the bilayer. Residues 200–229 (CSLCKHLKKMQLHGKGSQDPSMKVHIKALQ) lie on the Cytoplasmic side of the membrane. Residues 230–250 (TVTSFLLLCAIYFLSVIMSVW) traverse the membrane as a helical segment. Residues 251 to 259 (SFESLENKP) lie on the Extracellular side of the membrane. Residues 260–280 (VFMFCEAITFSYPSTHPFILI) form a helical membrane-spanning segment. Topologically, residues 281 to 309 (WGNKKLKQTFLSVLWHVRYWVKGEKPSSS) are cytoplasmic.

Belongs to the G-protein coupled receptor T2R family.

The protein localises to the membrane. It localises to the cell projection. It is found in the cilium membrane. Its function is as follows. Receptor that may play a role in the perception of bitterness and is gustducin-linked. May play a role in sensing the chemical composition of the gastrointestinal content. The activity of this receptor may stimulate alpha gustducin, mediate PLC-beta-2 activation and lead to the gating of TRPM5. In airway epithelial cells, binding of bitter compounds increases the intracellular calcium ion concentration and stimulates ciliary beat frequency. The polypeptide is Taste receptor type 2 member 46 (TAS2R46) (Gorilla gorilla gorilla (Western lowland gorilla)).